The primary structure comprises 201 residues: FMN-dependent NADH:quinone oxidoreductase (201 aa).

Residues Ser-10, 16 to 18 (SQS), 96 to 99 (MYNF), and 140 to 143 (SRGG) contribute to the FMN site.

The protein belongs to the azoreductase type 1 family. Homodimer. It depends on FMN as a cofactor.

The enzyme catalyses 2 a quinone + NADH + H(+) = 2 a 1,4-benzosemiquinone + NAD(+). It catalyses the reaction N,N-dimethyl-1,4-phenylenediamine + anthranilate + 2 NAD(+) = 2-(4-dimethylaminophenyl)diazenylbenzoate + 2 NADH + 2 H(+). In terms of biological role, quinone reductase that provides resistance to thiol-specific stress caused by electrophilic quinones. Functionally, also exhibits azoreductase activity. Catalyzes the reductive cleavage of the azo bond in aromatic azo compounds to the corresponding amines. The chain is FMN-dependent NADH:quinone oxidoreductase from Yersinia enterocolitica serotype O:8 / biotype 1B (strain NCTC 13174 / 8081).